Here is a 488-residue protein sequence, read N- to C-terminus: Glutamyl-tRNA(Gln) amidotransferase subunit A (488 aa).

Active-site charge relay system residues include lysine 78 and serine 153. The active-site Acyl-ester intermediate is serine 177.

It belongs to the amidase family. GatA subfamily. Heterotrimer of A, B and C subunits.

The catalysed reaction is L-glutamyl-tRNA(Gln) + L-glutamine + ATP + H2O = L-glutaminyl-tRNA(Gln) + L-glutamate + ADP + phosphate + H(+). Allows the formation of correctly charged Gln-tRNA(Gln) through the transamidation of misacylated Glu-tRNA(Gln) in organisms which lack glutaminyl-tRNA synthetase. The reaction takes place in the presence of glutamine and ATP through an activated gamma-phospho-Glu-tRNA(Gln). This is Glutamyl-tRNA(Gln) amidotransferase subunit A from Caldanaerobacter subterraneus subsp. tengcongensis (strain DSM 15242 / JCM 11007 / NBRC 100824 / MB4) (Thermoanaerobacter tengcongensis).